A 549-amino-acid polypeptide reads, in one-letter code: Oxygen-dependent choline dehydrogenase (549 aa).

FAD is bound at residue 4 to 33 (DFVIIGSGSAGSAMAYRLSEDGRYSVIVIE). His-465 acts as the Proton acceptor in catalysis.

It belongs to the GMC oxidoreductase family. FAD serves as cofactor.

It catalyses the reaction choline + A = betaine aldehyde + AH2. The enzyme catalyses betaine aldehyde + NAD(+) + H2O = glycine betaine + NADH + 2 H(+). The protein operates within amine and polyamine biosynthesis; betaine biosynthesis via choline pathway; betaine aldehyde from choline (cytochrome c reductase route): step 1/1. Functionally, involved in the biosynthesis of the osmoprotectant glycine betaine. Catalyzes the oxidation of choline to betaine aldehyde and betaine aldehyde to glycine betaine at the same rate. The chain is Oxygen-dependent choline dehydrogenase from Brucella ovis (strain ATCC 25840 / 63/290 / NCTC 10512).